We begin with the raw amino-acid sequence, 433 residues long: UDP-N-acetylglucosamine 1-carboxyvinyltransferase (433 aa).

A phosphoenolpyruvate-binding site is contributed by 22–23; that stretch reads KN. Arg96 lines the UDP-N-acetyl-alpha-D-glucosamine pocket. Cys120 functions as the Proton donor in the catalytic mechanism. Position 120 is a 2-(S-cysteinyl)pyruvic acid O-phosphothioketal (Cys120). Residues 125–129, Asp308, and Ile330 each bind UDP-N-acetyl-alpha-D-glucosamine; that span reads RPIDL.

The protein belongs to the EPSP synthase family. MurA subfamily.

The protein localises to the cytoplasm. The catalysed reaction is phosphoenolpyruvate + UDP-N-acetyl-alpha-D-glucosamine = UDP-N-acetyl-3-O-(1-carboxyvinyl)-alpha-D-glucosamine + phosphate. The protein operates within cell wall biogenesis; peptidoglycan biosynthesis. Cell wall formation. Adds enolpyruvyl to UDP-N-acetylglucosamine. This Koribacter versatilis (strain Ellin345) protein is UDP-N-acetylglucosamine 1-carboxyvinyltransferase.